Here is a 124-residue protein sequence, read N- to C-terminus: Ribonuclease P protein component (124 aa).

It belongs to the RnpA family. In terms of assembly, consists of a catalytic RNA component (M1 or rnpB) and a protein subunit.

The catalysed reaction is Endonucleolytic cleavage of RNA, removing 5'-extranucleotides from tRNA precursor.. In terms of biological role, RNaseP catalyzes the removal of the 5'-leader sequence from pre-tRNA to produce the mature 5'-terminus. It can also cleave other RNA substrates such as 4.5S RNA. The protein component plays an auxiliary but essential role in vivo by binding to the 5'-leader sequence and broadening the substrate specificity of the ribozyme. This chain is Ribonuclease P protein component, found in Maridesulfovibrio salexigens (strain ATCC 14822 / DSM 2638 / NCIMB 8403 / VKM B-1763) (Desulfovibrio salexigens).